The sequence spans 228 residues: Protein slowmo homolog (228 aa).

A PRELI/MSF1 domain is found at 1 to 172 (MPLFETIKHT…TIIKVQKEAE (172 aa)).

Belongs to the slowmo family.

In Dictyostelium discoideum (Social amoeba), this protein is Protein slowmo homolog (slmo).